The following is a 301-amino-acid chain: tRNA pseudouridine synthase B (301 aa).

Asp-45 functions as the Nucleophile in the catalytic mechanism.

It belongs to the pseudouridine synthase TruB family. Type 1 subfamily.

The enzyme catalyses uridine(55) in tRNA = pseudouridine(55) in tRNA. Responsible for synthesis of pseudouridine from uracil-55 in the psi GC loop of transfer RNAs. The sequence is that of tRNA pseudouridine synthase B from Streptomyces coelicolor (strain ATCC BAA-471 / A3(2) / M145).